The following is a 148-amino-acid chain: 3-dehydroquinate dehydratase (148 aa).

Tyr23 functions as the Proton acceptor in the catalytic mechanism. Substrate contacts are provided by Asn75, His81, and Asp88. The Proton donor role is filled by His101. Residues 102–103 (LS) and Arg112 contribute to the substrate site.

The protein belongs to the type-II 3-dehydroquinase family. Homododecamer.

It carries out the reaction 3-dehydroquinate = 3-dehydroshikimate + H2O. It participates in metabolic intermediate biosynthesis; chorismate biosynthesis; chorismate from D-erythrose 4-phosphate and phosphoenolpyruvate: step 3/7. Functionally, catalyzes a trans-dehydration via an enolate intermediate. This is 3-dehydroquinate dehydratase from Xylella fastidiosa (strain 9a5c).